Reading from the N-terminus, the 277-residue chain is Basic leucine zipper 9 (277 aa).

Positions 73–141 are disordered; the sequence is ADSPVSANKP…ESAKRSRRRK (69 aa). S100 carries the post-translational modification Phosphoserine. Positions 109–118 are enriched in polar residues; that stretch reads AGQSEMTNDP. A bZIP domain is found at 120–183; the sequence is DLKRIRRMNS…RSAGTNNRVL (64 aa). A basic motif region spans residues 122–141; the sequence is KRIRRMNSNRESAKRSRRRK. The short motif at 124–131 is the Nuclear localization signal element; sequence IRRMNSNR. The tract at residues 148 to 162 is leucine-zipper; it reads LETQVDSLKGDNSTL.

Belongs to the bZIP family. As to quaternary structure, homodimer. Interacts with BZIP1, BZIP2, BZIP10, BZIP11, BZIP25, BZIP44, BZIP53 and BZIP63. In terms of processing, phosphorylated. As to expression, expressed in roots, shoots, stems, young leaves, and flowers, mostly in vascular tissues (e.g. phloem).

It localises to the nucleus. Transcription factor. In Arabidopsis thaliana (Mouse-ear cress), this protein is Basic leucine zipper 9 (BZIP9).